We begin with the raw amino-acid sequence, 330 residues long: Aspartate--ammonia ligase (330 aa).

It belongs to the class-II aminoacyl-tRNA synthetase family. AsnA subfamily.

The protein resides in the cytoplasm. The catalysed reaction is L-aspartate + NH4(+) + ATP = L-asparagine + AMP + diphosphate + H(+). It functions in the pathway amino-acid biosynthesis; L-asparagine biosynthesis; L-asparagine from L-aspartate (ammonia route): step 1/1. This chain is Aspartate--ammonia ligase, found in Streptococcus pneumoniae serotype 19F (strain G54).